The sequence spans 164 residues: HTH-type transcriptional regulator IscR (164 aa).

The HTH rrf2-type domain maps to 2-131; it reads RLTSKGRYAV…GSISLEELVK (130 aa). A DNA-binding region (H-T-H motif) is located at residues 28–51; the sequence is LADISERQGISLSYLEQLFSRLRK. Residues Cys92, Cys98, and Cys104 each contribute to the [2Fe-2S] cluster site. A disordered region spans residues 140–164; sequence DRQDSDKRRTPNGRPQETINVNLRA. A compositionally biased stretch (polar residues) spans 152–164; sequence GRPQETINVNLRA.

Requires [2Fe-2S] cluster as cofactor.

Functionally, regulates the transcription of several operons and genes involved in the biogenesis of Fe-S clusters and Fe-S-containing proteins. The sequence is that of HTH-type transcriptional regulator IscR from Xenorhabdus nematophila (strain ATCC 19061 / DSM 3370 / CCUG 14189 / LMG 1036 / NCIMB 9965 / AN6).